Reading from the N-terminus, the 406-residue chain is Fosmidomycin resistance protein (406 aa).

Residues 1-42 (MAMSEQPQPVAGAAASTTKARTSFGILGAISLSHLLNDMIQS) are Periplasmic-facing. 2 consecutive transmembrane segments (helical) span residues 43 to 63 (LILA…MQIG) and 64 to 84 (MITL…GYWT). The Periplasmic portion of the chain corresponds to 85–102 (DKYPMPWSLPIGMCFTLS). The chain crosses the membrane as a helical span at residues 103 to 123 (GLVLLALAGSFGAVLLAAALV). The Cytoplasmic segment spans residues 124–151 (GTGSSVFHPESSRVARMASGGRHGLAQS). Residues 152–172 (IFQVGGNFGSSLGPLLAAVII) form a helical membrane-spanning segment. At 173–177 (APYGK) the chain is on the periplasmic side. A helical transmembrane segment spans residues 178–198 (GNVAWFVLAALLAIVVLAQIS). Over 199 to 225 (RWYSAQHRMNKGKPKATIINPLPRNKV) the chain is Cytoplasmic. Residues 226-246 (VLAVSILLILIFSKYFYMASI) traverse the membrane as a helical segment. The Periplasmic portion of the chain corresponds to 247–266 (SSYYTFYLMQKFGLSIQNAQ). A helical membrane pass occupies residues 267-287 (LHLFAFLFAVAAGTVIGGPVG). Residues 288–294 (DKIGRKY) lie on the Cytoplasmic side of the membrane. Residues 295–315 (VIWGSILGVAPFTLILPYASL) traverse the membrane as a helical segment. Residues 316–319 (HWTG) are Periplasmic-facing. Residues 320 to 340 (VLTVIIGFILASAFSAILVYA) traverse the membrane as a helical segment. The Cytoplasmic segment spans residues 341 to 353 (QELLPGRIGMVSG). The chain crosses the membrane as a helical span at residues 354 to 374 (LFFGFAFGMGGLGAAVLGLIA). The Periplasmic segment spans residues 375 to 378 (DHTS). Residues 379 to 399 (IELVYKICAFLPLLGMLTIFL) form a helical membrane-spanning segment. At 400-406 (PDNRHKD) the chain is on the cytoplasmic side.

This sequence belongs to the major facilitator superfamily.

It is found in the cell inner membrane. Its function is as follows. Confers the resistance against fosmidomycin. This is Fosmidomycin resistance protein (fsr) from Escherichia coli (strain K12).